The sequence spans 202 residues: Peptide deformylase (202 aa).

The disordered stretch occupies residues 1-24; it reads MAGSFAQLAKNAEKKKPSISVSKE. Residues Cys121 and His163 each contribute to the Fe cation site. The active site involves Glu164. Position 167 (His167) interacts with Fe cation.

Belongs to the polypeptide deformylase family. Fe(2+) serves as cofactor.

The enzyme catalyses N-terminal N-formyl-L-methionyl-[peptide] + H2O = N-terminal L-methionyl-[peptide] + formate. Its function is as follows. Removes the formyl group from the N-terminal Met of newly synthesized proteins. Requires at least a dipeptide for an efficient rate of reaction. N-terminal L-methionine is a prerequisite for activity but the enzyme has broad specificity at other positions. The protein is Peptide deformylase of Prochlorococcus marinus (strain NATL2A).